Here is a 145-residue protein sequence, read N- to C-terminus: Ribonuclease VapC48 (145 aa).

Residues aspartate 6 and aspartate 109 each coordinate Mg(2+). Positions 15 to 141 (HRASPFHDKA…RKFEGIRIRD (127 aa)) constitute a PINc domain.

Belongs to the PINc/VapC protein family. Mg(2+) serves as cofactor.

Toxic component of a type II toxin-antitoxin (TA) system. An RNase. Its cognate antitoxin is VapB48. The chain is Ribonuclease VapC48 from Mycobacterium tuberculosis (strain CDC 1551 / Oshkosh).